The primary structure comprises 608 residues: MSEWESYYKTEGEEEEEEEESPDTGGEYKYSGRDSLIFLVDASRAMFESQGEDELTPFDMSIQCIQSVYTSKIISSDRDLLAVVFYGTEKDKNSVNFKNIYVLQDLDNPGAKRVLELDQFKGQQGKKHFRDTVGHGSDYSLSEVLWVCANLFSDVQLKMSHKRIMLFTNEDDPHGRDSAKASRARTKASDLRDTGIFLDLMHLKKPGGFDVSVFYRDIITTAEDEDLGVHFEESSKLEDLLRKVRAKETKKRVLSRLKFKLGEDVVLMVGIYNLVQKANKPFPVRLYRETNEPVKTKTRTFNVNTGSLLLPSDTKRSLTYGTRQIVLEKEETEELKRFDEPGLILMGFKPTVMLKKQHYLRPSLFVYPEESLVSGSSTLFSALLTKCVEKKVIAVCRYTPRKNVSPYFVALVPQEEELDDQNIQVTPGGFQLVFLPYADDKRKVPFTEKVTANQEQIDKMKAIVQKLRFTYRSDSFENPVLQQHFRNLEALALDMMESEQVVDLTLPKVEAIKKRLGSLADEFKELVYPPGYNPEGKVAKRKQDDEGSTSKKPKVELSEEELKAHFRKGTLGKLTVPTLKDICKAHGLKSGPKKQELLDALIRHLEKN.

Residues 1–11 (MSEWESYYKTE) are compositionally biased toward basic and acidic residues. The tract at residues 1 to 29 (MSEWESYYKTEGEEEEEEEESPDTGGEYK) is disordered. Residue serine 2 is modified to N-acetylserine. Serine 2 is subject to Phosphoserine. At serine 6 the chain carries Phosphoserine; by PRKDC. The segment covering 12–22 (GEEEEEEEESP) has biased composition (acidic residues). The active-site Schiff-base intermediate with DNA; for 5'-deoxyribose-5-phosphate lyase activity is the lysine 29. Lysine 29 carries the post-translational modification N6-acetyllysine. Serine 49 carries the phosphoserine; by PRKDC modification. In terms of domain architecture, Ku spans 259–466 (FKLGEDVVLM…IDKMKAIVQK (208 aa)). The DNA-binding stretch occupies residues 275-339 (VQKANKPFPV…EETEELKRFD (65 aa)). Lysine 315 participates in a covalent cross-link: Glycyl lysine isopeptide (Lys-Gly) (interchain with G-Cter in SUMO2). 3 positions are modified to N6-acetyllysine: lysine 329, lysine 336, and lysine 459. Residues 371-480 (SLVSGSSTLF…YRSDSFENPV (110 aa)) form an interaction with XRCC5 region. Phosphoserine is present on residues serine 475, serine 518, and serine 548. The disordered stretch occupies residues 534 to 557 (PEGKVAKRKQDDEGSTSKKPKVEL). The segment covering 537–557 (KVAKRKQDDEGSTSKKPKVEL) has biased composition (basic and acidic residues). Positions 548-607 (STSKKPKVELSEEELKAHFRKGTLGKLTVPTLKDICKAHGLKSGPKKQELLDALIRHLEK) are interaction with DEAF1. A Glycyl lysine isopeptide (Lys-Gly) (interchain with G-Cter in SUMO2) cross-link involves residue lysine 554. The residue at position 558 (serine 558) is a Phosphoserine. Lysine 568 is modified (N6,N6,N6-trimethyllysine). Residues 571-605 (LGKLTVPTLKDICKAHGLKSGPKKQELLDALIRHL) form the SAP domain. Residues 576 to 581 (VPTLKD) form an interaction with BAX region.

The protein belongs to the ku70 family. In terms of assembly, heterodimer composed of XRCC5/Ku80 and XRCC6/Ku70. Component of the core long-range non-homologous end joining (NHEJ) complex (also named DNA-PK complex) composed of PRKDC, LIG4, XRCC4, XRCC6/Ku70, XRCC5/Ku86 and NHEJ1/XLF. Additional component of the NHEJ complex includes PAXX. Following autophosphorylation, PRKDC dissociates from DNA, leading to formation of the short-range NHEJ complex, composed of LIG4, XRCC4, XRCC6/Ku70, XRCC5/Ku86 and NHEJ1/XLF. The XRCC5-XRCC6 dimer also associates with NAA15, and this complex binds to the osteocalcin promoter and activates osteocalcin expression. In addition, XRCC6 interacts with the osteoblast-specific transcription factors MSX2, RUNX2 and DLX5. Interacts with ELF3. Interacts with ATP23. The XRCC5-XRRC6 dimer associates in a DNA-dependent manner with APEX1. Binds to CDK9. Identified in a complex with DEAF1 and XRCC5. Interacts with DEAF1 (via the SAND domain); the interaction is direct and may be inhibited by DNA-binding. Interacts with CLU. Interacts with NR4A3; the DNA-dependent protein kinase complex DNA-PK phosphorylates and activates NR4A3 and prevents NR4A3 ubiquitinylation and degradation. Interacts with CYREN (via KBM motif). Interacts (via N-terminus) with HSF1 (via N-terminus); this interaction is direct and prevents XRCC5/XRCC6 heterodimeric binding and non-homologous end joining (NHEJ) repair activities induced by ionizing radiation (IR). Part of the HDP-RNP complex composed of at least HEXIM1, PRKDC, XRCC5, XRCC6, paraspeckle proteins (SFPQ, NONO, PSPC1, RBM14, and MATR3) and NEAT1 RNA. Interacts with HMBOX1. Interacts with ATF7. Interacts with APLF (via KBM motif). Interacts with WRN (via KBM motif). The XRCC5-XRCC6 dimer associates with ALKBH2. Interacts with TPRN; TPRN interacts with a number of DNA damage response proteins, is recruited to sites of DNA damage and may play a role in DNA damage repair. When not acetylated, interacts with BAX. Interacts with ERCC6L2. In terms of processing, phosphorylation by PRKDC may enhance helicase activity. Phosphorylation of Ser-49 does not affect DNA repair. ADP-ribosylated by PARP3. Post-translationally, methylation by SETD4 leads to accumulation in the cytoplasm and is a prerequisite for acetylation, possibly due to the change of subcellular from the nucleus to the cytosol initiated by methylation, acetylation occurring in the cytosol. In terms of processing, acetylation can be catalyzed in vitro by CREBBP/CBP and KAT2B/PCAF.

The protein localises to the nucleus. Its subcellular location is the chromosome. It localises to the cytoplasm. Functionally, single-stranded DNA-dependent ATP-dependent helicase that plays a key role in DNA non-homologous end joining (NHEJ) by recruiting DNA-PK to DNA. Required for double-strand break repair and V(D)J recombination. Also has a role in chromosome translocation. Has a role in chromosome translocation. The DNA helicase II complex binds preferentially to fork-like ends of double-stranded DNA in a cell cycle-dependent manner. It works in the 3'-5' direction. During NHEJ, the XRCC5-XRRC6 dimer performs the recognition step: it recognizes and binds to the broken ends of the DNA and protects them from further resection. Binding to DNA may be mediated by XRCC6. The XRCC5-XRRC6 dimer acts as a regulatory subunit of the DNA-dependent protein kinase complex DNA-PK by increasing the affinity of the catalytic subunit PRKDC to DNA by 100-fold. The XRCC5-XRRC6 dimer is probably involved in stabilizing broken DNA ends and bringing them together. The assembly of the DNA-PK complex to DNA ends is required for the NHEJ ligation step. Probably also acts as a 5'-deoxyribose-5-phosphate lyase (5'-dRP lyase), by catalyzing the beta-elimination of the 5' deoxyribose-5-phosphate at an abasic site near double-strand breaks. 5'-dRP lyase activity allows to 'clean' the termini of abasic sites, a class of nucleotide damage commonly associated with strand breaks, before such broken ends can be joined. The XRCC5-XRRC6 dimer together with APEX1 acts as a negative regulator of transcription. In association with NAA15, the XRCC5-XRRC6 dimer binds to the osteocalcin promoter and activates osteocalcin expression. Plays a role in the regulation of DNA virus-mediated innate immune response by assembling into the HDP-RNP complex, a complex that serves as a platform for IRF3 phosphorylation and subsequent innate immune response activation through the cGAS-STING pathway. Negatively regulates apoptosis by interacting with BAX and sequestering it from the mitochondria. Might have deubiquitination activity, acting on BAX. This Mus musculus (Mouse) protein is X-ray repair cross-complementing protein 6 (Xrcc6).